Consider the following 157-residue polypeptide: Ribonuclease 8 (157 aa).

A signal peptide spans 1–30; it reads MAPARAGCCPLLLLLLLLLGLWVAEVLVSA. H45 functions as the Proton acceptor in the catalytic mechanism. 4 disulfides stabilise this stretch: C53-C96, C67-C121, C85-C136, and C92-C99. Substrate-binding positions include 68–72 and K93; that span reads KDLNT. H152 serves as the catalytic Proton donor.

This sequence belongs to the pancreatic ribonuclease family.

It localises to the secreted. In terms of biological role, has a low ribonuclease activity. The polypeptide is Ribonuclease 8 (RNASE8) (Pan troglodytes (Chimpanzee)).